The primary structure comprises 369 residues: MSTIMQKIKEIEDEMAKTQKNKATSHHLGLLKAKLAKLRRDLLAPPTKGGGGGAGEGFDVTKSGDSRVGLVGFPSVGKSTLLNKLTGTFSEVASYEFTTLTCIPGVITYRGAKIQLLDLPGIIEGAKDGKGRGRQVISTARTCNCILIVLDAIKPITHKRLIEKELEGFGIRLNKEPPNLTFRKKDKGGINLTSTVAVTHLDLDTVKAICGEYRMHNADITLRYDATADDLIDVIEGSRIYMPCIYAVNKIDSITLEELEILDKLPHYCPVSAHLEWNLDGLLDKIWEYLDLTRIYTKPKAMNPDYDDPVILSSKKRTVEDFCIRIHKDMLKQFKYALVWGSSAKHKPQRVGKEHELEDEDVVQIVKKI.

The region spanning 66-291 (SRVGLVGFPS…LLDKIWEYLD (226 aa)) is the OBG-type G domain. Residues 72 to 79 (GFPSVGKS), 118 to 122 (DLPGI), and 249 to 252 (NKID) each bind GTP. A TGS domain is found at 291-367 (DLTRIYTKPK…EDEDVVQIVK (77 aa)).

It belongs to the TRAFAC class OBG-HflX-like GTPase superfamily. OBG GTPase family.

Binds GDP and GTP, and has low GTPase activity in vitro. This chain is Developmentally-regulated G-protein 3 (DRG3), found in Arabidopsis thaliana (Mouse-ear cress).